The sequence spans 24 residues: 29 kDa outer membrane protein (24 aa).

It is found in the cell outer membrane. In terms of biological role, may be involved in transporting molecules across the outer membrane. The chain is 29 kDa outer membrane protein from Acinetobacter baumannii.